Reading from the N-terminus, the 317-residue chain is Ferrochelatase (317 aa).

Residues H191 and E271 each coordinate Fe cation.

Belongs to the ferrochelatase family.

The protein resides in the cytoplasm. It catalyses the reaction heme b + 2 H(+) = protoporphyrin IX + Fe(2+). Its pathway is porphyrin-containing compound metabolism; protoheme biosynthesis; protoheme from protoporphyrin-IX: step 1/1. Functionally, catalyzes the ferrous insertion into protoporphyrin IX. This Thermus thermophilus (strain ATCC BAA-163 / DSM 7039 / HB27) protein is Ferrochelatase.